The following is a 224-amino-acid chain: Lipoprotein-releasing system ATP-binding protein LolD (224 aa).

Residues 6 to 224 (VRLRELRRSF…VVRLHEGVLE (219 aa)) form the ABC transporter domain. Residue 42 to 49 (GPSGSGKS) participates in ATP binding.

The protein belongs to the ABC transporter superfamily. Lipoprotein translocase (TC 3.A.1.125) family. The complex is composed of two ATP-binding proteins (LolD) and two transmembrane proteins (LolC and LolE).

The protein resides in the cell inner membrane. In terms of biological role, part of the ABC transporter complex LolCDE involved in the translocation of mature outer membrane-directed lipoproteins, from the inner membrane to the periplasmic chaperone, LolA. Responsible for the formation of the LolA-lipoprotein complex in an ATP-dependent manner. This Novosphingobium aromaticivorans (strain ATCC 700278 / DSM 12444 / CCUG 56034 / CIP 105152 / NBRC 16084 / F199) protein is Lipoprotein-releasing system ATP-binding protein LolD.